Consider the following 104-residue polypeptide: Small ribosomal subunit protein uS10 (104 aa).

Belongs to the universal ribosomal protein uS10 family. Part of the 30S ribosomal subunit.

Functionally, involved in the binding of tRNA to the ribosomes. The chain is Small ribosomal subunit protein uS10 from Alkaliphilus metalliredigens (strain QYMF).